A 544-amino-acid polypeptide reads, in one-letter code: Chaperonin GroEL (544 aa).

Residues 30 to 33 (TLGP), Lys51, 87 to 91 (DGTTT), Gly415, 478 to 480 (NAA), and Asp494 each bind ATP.

Belongs to the chaperonin (HSP60) family. In terms of assembly, forms a cylinder of 14 subunits composed of two heptameric rings stacked back-to-back. Interacts with the co-chaperonin GroES.

It localises to the cytoplasm. It catalyses the reaction ATP + H2O + a folded polypeptide = ADP + phosphate + an unfolded polypeptide.. In terms of biological role, together with its co-chaperonin GroES, plays an essential role in assisting protein folding. The GroEL-GroES system forms a nano-cage that allows encapsulation of the non-native substrate proteins and provides a physical environment optimized to promote and accelerate protein folding. The sequence is that of Chaperonin GroEL from Geobacter sulfurreducens (strain ATCC 51573 / DSM 12127 / PCA).